A 74-amino-acid polypeptide reads, in one-letter code: Cell division protein ZapB (74 aa).

Residues Thr-2–Ser-74 are a coiled coil.

The protein belongs to the ZapB family. In terms of assembly, homodimer. The ends of the coiled-coil dimer bind to each other, forming polymers. Interacts with FtsZ.

The protein resides in the cytoplasm. Its function is as follows. Non-essential, abundant cell division factor that is required for proper Z-ring formation. It is recruited early to the divisome by direct interaction with FtsZ, stimulating Z-ring assembly and thereby promoting cell division earlier in the cell cycle. Its recruitment to the Z-ring requires functional FtsA or ZipA. The chain is Cell division protein ZapB from Psychromonas ingrahamii (strain DSM 17664 / CCUG 51855 / 37).